A 293-amino-acid chain; its full sequence is Probable flavonol synthase 6 (293 aa).

Residues 156 to 253 (KAQYVMRINY…RMSWPILVEP (98 aa)) form the Fe2OG dioxygenase domain. 164–166 (NYY) is a 2-oxoglutarate binding site. The Fe cation site is built by His178, Asp180, and His234. A 2-oxoglutarate-binding site is contributed by 244 to 246 (RMS).

Belongs to the iron/ascorbate-dependent oxidoreductase family. Requires Fe(2+) as cofactor.

The catalysed reaction is a (2R,3R)-dihydroflavonol + 2-oxoglutarate + O2 = a flavonol + succinate + CO2 + H2O. Its pathway is secondary metabolite biosynthesis; flavonoid biosynthesis. The protein is Probable flavonol synthase 6 (FLS6) of Arabidopsis thaliana (Mouse-ear cress).